The following is a 262-amino-acid chain: Hemin import ATP-binding protein HmuV (262 aa).

The 240-residue stretch at 2 to 241 (IRASDISVRL…ETMEAVFGCR (240 aa)) folds into the ABC transporter domain. An ATP-binding site is contributed by 34–41 (GPNGSGKT).

Belongs to the ABC transporter superfamily. Heme (hemin) importer (TC 3.A.1.14.5) family. In terms of assembly, the complex is composed of two ATP-binding proteins (HmuV), two transmembrane proteins (HmuU) and a solute-binding protein (HmuT).

Its subcellular location is the cell inner membrane. In terms of biological role, part of the ABC transporter complex HmuTUV involved in hemin import. Responsible for energy coupling to the transport system. The protein is Hemin import ATP-binding protein HmuV of Rhizobium meliloti (strain 1021) (Ensifer meliloti).